Reading from the N-terminus, the 169-residue chain is NAD(P)H-quinone oxidoreductase subunit J, chloroplastic (169 aa).

It belongs to the complex I 30 kDa subunit family. As to quaternary structure, NDH is composed of at least 16 different subunits, 5 of which are encoded in the nucleus.

The protein resides in the plastid. It localises to the chloroplast thylakoid membrane. It catalyses the reaction a plastoquinone + NADH + (n+1) H(+)(in) = a plastoquinol + NAD(+) + n H(+)(out). The enzyme catalyses a plastoquinone + NADPH + (n+1) H(+)(in) = a plastoquinol + NADP(+) + n H(+)(out). Functionally, NDH shuttles electrons from NAD(P)H:plastoquinone, via FMN and iron-sulfur (Fe-S) centers, to quinones in the photosynthetic chain and possibly in a chloroplast respiratory chain. The immediate electron acceptor for the enzyme in this species is believed to be plastoquinone. Couples the redox reaction to proton translocation, and thus conserves the redox energy in a proton gradient. The sequence is that of NAD(P)H-quinone oxidoreductase subunit J, chloroplastic from Staurastrum punctulatum (Green alga).